The primary structure comprises 374 residues: MARSTPCSQTSLAVPTHFSLVSHVTVPSEGVMPSPLSLCRYLPRELSPSVDSRSCSIPLVAPRKAGKLFLGTTPPRAPGLPRRLAWFSIDWEQVCLMHRLGSGGFGSVYKATYHGVPVAIKQVNKCTKDLRASQRSFWAELNIARLRHDNIVRVVAASTRTPEDSNSLGTIIMEFGGNVTLHQVIYGATRSPEPLSCREQLSLGKCLKYSLDVVNGLLFLHSQSILHLDLKPANILISEQDVCKISDFGCSQKLQDLRCRQASPHHIGGTYTHQAPEILKGEIATPKADIYSFGITLWQMTTREVPYSGEPQYVQYAVVAYNLRPSLAGAVFTASLTGKTLQNIIQSCWEARALQRPGAELLQRDLKAFRGALG.

The region spanning 94–370 (VCLMHRLGSG…LLQRDLKAFR (277 aa)) is the Protein kinase domain. ATP is bound by residues 100–108 (LGSGGFGSV) and Lys121. Asp229 functions as the Proton acceptor in the catalytic mechanism.

It belongs to the protein kinase superfamily. Ser/Thr protein kinase family.

It carries out the reaction L-seryl-[protein] + ATP = O-phospho-L-seryl-[protein] + ADP + H(+). The enzyme catalyses L-threonyl-[protein] + ATP = O-phospho-L-threonyl-[protein] + ADP + H(+). This Mus musculus (Mouse) protein is Serine/threonine-protein kinase-transforming protein mos (V-MOS).